We begin with the raw amino-acid sequence, 153 residues long: Putative pre-16S rRNA nuclease (153 aa).

Belongs to the YqgF nuclease family.

Its subcellular location is the cytoplasm. In terms of biological role, could be a nuclease involved in processing of the 5'-end of pre-16S rRNA. The chain is Putative pre-16S rRNA nuclease from Koribacter versatilis (strain Ellin345).